Reading from the N-terminus, the 556-residue chain is Phosphoglucomutase (556 aa).

Arg22 and Ser114 together coordinate alpha-D-glucose 1,6-bisphosphate. The active-site Phosphoserine intermediate is Ser114. Mg(2+) contacts are provided by Ser114, Asp279, Asp281, and Asp283. Ser114 bears the Phosphoserine mark. Asp283, Arg284, Thr347, Glu366, Ser368, and Lys379 together coordinate alpha-D-glucose 1,6-bisphosphate.

The protein belongs to the phosphohexose mutase family. As to quaternary structure, monomer. It depends on Mg(2+) as a cofactor.

It localises to the cytoplasm. The enzyme catalyses alpha-D-glucose 1-phosphate = alpha-D-glucose 6-phosphate. The catalysed reaction is O-phospho-L-seryl-[protein] + alpha-D-glucose 1-phosphate = alpha-D-glucose 1,6-bisphosphate + L-seryl-[protein]. It catalyses the reaction alpha-D-glucose 1,6-bisphosphate + L-seryl-[protein] = O-phospho-L-seryl-[protein] + alpha-D-glucose 6-phosphate. Functionally, catalyzes the reversible isomerization of alpha-D-glucose 1-phosphate to alpha-D-glucose 6-phosphate. The mechanism proceeds via the intermediate compound alpha-D-glucose 1,6-bisphosphate. Key enzyme in hexose metabolism. The reverse reaction is an essential step for biosynthesis because glucose 1-phosphate is the starting point for the synthesis of UDP-glucose, which acts as a precursor for the synthesis of oligosaccharides and trehalose. This is Phosphoglucomutase (pgmB) from Emericella nidulans (strain FGSC A4 / ATCC 38163 / CBS 112.46 / NRRL 194 / M139) (Aspergillus nidulans).